Consider the following 496-residue polypeptide: Cyclin-L1 (496 aa).

Cyclin-like stretches follow at residues 68–170 (ELIQ…RILK) and 183–267 (KIIV…TTLR). The disordered stretch occupies residues 301–496 (NPDGTPAILS…SHSGHGRHRR (196 aa)). A compositionally biased stretch (basic and acidic residues) spans 322–347 (SPRDVKTEEKSPNFAKVKREMDDKQS). Composition is skewed to basic residues over residues 358–392 (ENKR…RRSR), 412–426 (RRHH…KLKH), 434–446 (RHAH…HSPS), and 456–468 (KKHR…HRER). Positions 363 to 406 (RSVSRSRSRTKSRSRSHSPRRHYNNRRRSRSGTYSSRSRSRSRS) are RS. The span at 469-478 (RERSRSFERS) shows a compositional bias: basic and acidic residues. The segment covering 479-496 (HKNKHHGSSHSGHGRHRR) has biased composition (basic residues).

This sequence belongs to the cyclin family. Cyclin L subfamily.

Its subcellular location is the nucleus speckle. It is found in the nucleus. It localises to the nucleoplasm. Functionally, involved in pre-mRNA splicing. This Xenopus laevis (African clawed frog) protein is Cyclin-L1 (ccnl1).